Here is a 488-residue protein sequence, read N- to C-terminus: Ribulose bisphosphate carboxylase large chain (488 aa).

Substrate-binding residues include asparagine 127 and threonine 177. Lysine 179 acts as the Proton acceptor in catalysis. Residue lysine 181 participates in substrate binding. Lysine 205, aspartate 207, and glutamate 208 together coordinate Mg(2+). Lysine 205 carries the post-translational modification N6-carboxylysine. Histidine 297 serves as the catalytic Proton acceptor. Substrate is bound by residues arginine 298, histidine 330, and serine 382.

This sequence belongs to the RuBisCO large chain family. Type I subfamily. As to quaternary structure, heterohexadecamer of 8 large chains and 8 small chains. Mg(2+) serves as cofactor.

Its subcellular location is the plastid. The protein resides in the chloroplast. The enzyme catalyses 2 (2R)-3-phosphoglycerate + 2 H(+) = D-ribulose 1,5-bisphosphate + CO2 + H2O. It carries out the reaction D-ribulose 1,5-bisphosphate + O2 = 2-phosphoglycolate + (2R)-3-phosphoglycerate + 2 H(+). Functionally, ruBisCO catalyzes two reactions: the carboxylation of D-ribulose 1,5-bisphosphate, the primary event in carbon dioxide fixation, as well as the oxidative fragmentation of the pentose substrate in the photorespiration process. Both reactions occur simultaneously and in competition at the same active site. The polypeptide is Ribulose bisphosphate carboxylase large chain (Gracilaria tenuistipitata var. liui (Red alga)).